Consider the following 165-residue polypeptide: Crossover junction endodeoxyribonuclease RuvC (165 aa).

Active-site residues include aspartate 7, glutamate 66, and aspartate 138. Mg(2+)-binding residues include aspartate 7, glutamate 66, and aspartate 138.

Belongs to the RuvC family. As to quaternary structure, homodimer which binds Holliday junction (HJ) DNA. The HJ becomes 2-fold symmetrical on binding to RuvC with unstacked arms; it has a different conformation from HJ DNA in complex with RuvA. In the full resolvosome a probable DNA-RuvA(4)-RuvB(12)-RuvC(2) complex forms which resolves the HJ. Mg(2+) serves as cofactor.

Its subcellular location is the cytoplasm. It catalyses the reaction Endonucleolytic cleavage at a junction such as a reciprocal single-stranded crossover between two homologous DNA duplexes (Holliday junction).. The RuvA-RuvB-RuvC complex processes Holliday junction (HJ) DNA during genetic recombination and DNA repair. Endonuclease that resolves HJ intermediates. Cleaves cruciform DNA by making single-stranded nicks across the HJ at symmetrical positions within the homologous arms, yielding a 5'-phosphate and a 3'-hydroxyl group; requires a central core of homology in the junction. The consensus cleavage sequence is 5'-(A/T)TT(C/G)-3'. Cleavage occurs on the 3'-side of the TT dinucleotide at the point of strand exchange. HJ branch migration catalyzed by RuvA-RuvB allows RuvC to scan DNA until it finds its consensus sequence, where it cleaves and resolves the cruciform DNA. The sequence is that of Crossover junction endodeoxyribonuclease RuvC from Ruegeria pomeroyi (strain ATCC 700808 / DSM 15171 / DSS-3) (Silicibacter pomeroyi).